The primary structure comprises 312 residues: Aspartate carbamoyltransferase catalytic subunit (312 aa).

Carbamoyl phosphate contacts are provided by arginine 55 and threonine 56. Position 83 (lysine 83) interacts with L-aspartate. Carbamoyl phosphate-binding residues include arginine 105, histidine 133, and glutamine 136. Residues arginine 166 and arginine 220 each contribute to the L-aspartate site. The carbamoyl phosphate site is built by glycine 261 and proline 262.

Belongs to the aspartate/ornithine carbamoyltransferase superfamily. ATCase family. In terms of assembly, heterododecamer (2C3:3R2) of six catalytic PyrB chains organized as two trimers (C3), and six regulatory PyrI chains organized as three dimers (R2).

The enzyme catalyses carbamoyl phosphate + L-aspartate = N-carbamoyl-L-aspartate + phosphate + H(+). The protein operates within pyrimidine metabolism; UMP biosynthesis via de novo pathway; (S)-dihydroorotate from bicarbonate: step 2/3. Its function is as follows. Catalyzes the condensation of carbamoyl phosphate and aspartate to form carbamoyl aspartate and inorganic phosphate, the committed step in the de novo pyrimidine nucleotide biosynthesis pathway. The chain is Aspartate carbamoyltransferase catalytic subunit from Prosthecochloris aestuarii (strain DSM 271 / SK 413).